Reading from the N-terminus, the 507-residue chain is Dolichyl pyrophosphate Man9GlcNAc2 alpha-1,3-glucosyltransferase (507 aa).

Over Met1 to Lys3 the chain is Cytoplasmic. A helical membrane pass occupies residues Trp4 to Asn24. At Ser25–Thr114 the chain is on the lumenal side. A glycan (N-linked (GlcNAc...) asparagine) is linked at Asn59. The chain crosses the membrane as a helical span at residues Thr115–Leu135. At Lys136–Lys143 the chain is on the cytoplasmic side. The chain crosses the membrane as a helical span at residues Ile144–Phe164. Topologically, residues Gln165–Gly172 are lumenal. A helical transmembrane segment spans residues Phe173 to Phe193. Topologically, residues Cys194 to Lys226 are cytoplasmic. Residues Gly227–Leu247 traverse the membrane as a helical segment. At Pro248–Gln297 the chain is on the lumenal side. The helical transmembrane segment at Leu298–Leu318 threads the bilayer. Over Gln319 to Lys323 the chain is Cytoplasmic. Residues Gly324–His344 traverse the membrane as a helical segment. Residues Glu345–Glu361 lie on the Lumenal side of the membrane. A helical membrane pass occupies residues Ile362–Leu382. The Cytoplasmic segment spans residues Lys383–Leu387. Residues Met388–Phe408 traverse the membrane as a helical segment. The Lumenal segment spans residues Glu409–Arg437. The helical transmembrane segment at Ile438 to Val458 threads the bilayer. At Thr459 to Leu473 the chain is on the cytoplasmic side. The helical transmembrane segment at Val474–Val494 threads the bilayer. Over Trp495–Ser507 the chain is Lumenal.

Belongs to the ALG6/ALG8 glucosyltransferase family.

The protein resides in the endoplasmic reticulum membrane. It carries out the reaction an alpha-D-Man-(1-&gt;2)-alpha-D-Man-(1-&gt;2)-alpha-D-Man-(1-&gt;3)-[alpha-D-Man-(1-&gt;2)-alpha-D-Man-(1-&gt;3)-[alpha-D-Man-(1-&gt;2)-alpha-D-Man-(1-&gt;6)]-alpha-D-Man-(1-&gt;6)]-beta-D-Man-(1-&gt;4)-beta-D-GlcNAc-(1-&gt;4)-alpha-D-GlcNAc-diphospho-di-trans,poly-cis-dolichol + a di-trans,poly-cis-dolichyl beta-D-glucosyl phosphate = an alpha-D-Glc-(1-&gt;3)-alpha-D-Man-(1-&gt;2)-alpha-D-Man-(1-&gt;2)-alpha-D-Man-(1-&gt;3)-[alpha-D-Man-(1-&gt;2)-alpha-D-Man-(1-&gt;3)-[alpha-D-Man-(1-&gt;2)-alpha-D-Man-(1-&gt;6)]-alpha-D-Man-(1-&gt;6)]-beta-D-Man-(1-&gt;4)-beta-D-GlcNAc-(1-&gt;4)-alpha-D-GlcNAc-diphospho-di-trans,poly-cis-dolichol + a di-trans,poly-cis-dolichyl phosphate + H(+). Its pathway is protein modification; protein glycosylation. Functionally, dolichyl pyrophosphate Man9GlcNAc2 alpha-1,3-glucosyltransferase that operates in the biosynthetic pathway of dolichol-linked oligosaccharides, the glycan precursors employed in protein asparagine (N)-glycosylation. The assembly of dolichol-linked oligosaccharides begins on the cytosolic side of the endoplasmic reticulum membrane and finishes in its lumen. The sequential addition of sugars to dolichol pyrophosphate produces dolichol-linked oligosaccharides containing fourteen sugars, including two GlcNAcs, nine mannoses and three glucoses. Once assembled, the oligosaccharide is transferred from the lipid to nascent proteins by oligosaccharyltransferases. In the lumen of the endoplasmic reticulum, adds the first glucose residue from dolichyl phosphate glucose (Dol-P-Glc) onto the lipid-linked oligosaccharide intermediate Man(9)GlcNAc(2)-PP-Dol to produce Glc(1)Man(9)GlcNAc(2)-PP-Dol. Glc(1)Man(9)GlcNAc(2)-PP-Dol is a substrate for ALG8, the following enzyme in the biosynthetic pathway. The protein is Dolichyl pyrophosphate Man9GlcNAc2 alpha-1,3-glucosyltransferase of Pongo abelii (Sumatran orangutan).